Consider the following 55-residue polypeptide: MQKRELYEIADGKLVRKHRFCPRCGPGVFLAEHADRFTCGRCGYTEFKKVKKAKS.

Zn(2+) contacts are provided by Cys21, Cys24, Cys39, and Cys42. The C4-type zinc finger occupies 21–42 (CPRCGPGVFLAEHADRFTCGRC).

The protein belongs to the eukaryotic ribosomal protein eS31 family. Part of the 30S ribosomal subunit. Zn(2+) serves as cofactor.

The chain is Small ribosomal subunit protein eS31 from Thermoplasma volcanium (strain ATCC 51530 / DSM 4299 / JCM 9571 / NBRC 15438 / GSS1).